The primary structure comprises 121 residues: UPF0344 protein BC_1150 (121 aa).

A run of 4 helical transmembrane segments spans residues 6 to 26, 38 to 58, 65 to 85, and 92 to 112; these read ITAW…YSAG, LMYI…VKTA, WYGL…MVLV, and PTGA…YLGL.

This sequence belongs to the UPF0344 family.

Its subcellular location is the cell membrane. This is UPF0344 protein BC_1150 from Bacillus cereus (strain ATCC 14579 / DSM 31 / CCUG 7414 / JCM 2152 / NBRC 15305 / NCIMB 9373 / NCTC 2599 / NRRL B-3711).